The chain runs to 156 residues: Small ribosomal subunit protein uS7A/uS7B (156 aa).

It belongs to the universal ribosomal protein uS7 family. Part of the 30S ribosomal subunit. Contacts proteins S9 and S11.

Functionally, one of the primary rRNA binding proteins, it binds directly to 16S rRNA where it nucleates assembly of the head domain of the 30S subunit. Is located at the subunit interface close to the decoding center, probably blocks exit of the E-site tRNA. This chain is Small ribosomal subunit protein uS7A/uS7B, found in Bartonella bacilliformis (strain ATCC 35685 / KC583 / Herrer 020/F12,63).